An 83-amino-acid chain; its full sequence is Mitotic-spindle organizing protein 1 (83 aa).

Belongs to the MOZART1 family. Part of the gamma-tubulin complex.

Its subcellular location is the cytoplasm. The protein resides in the cytoskeleton. The protein localises to the microtubule organizing center. It localises to the spindle pole body. Its function is as follows. Required for gamma-tubulin complex recruitment to the microtubule organizing center (MTOC). The chain is Mitotic-spindle organizing protein 1 from Botryotinia fuckeliana (strain B05.10) (Noble rot fungus).